The following is a 686-amino-acid chain: Translation initiation factor IF-2 (686 aa).

Residues 54–105 (KPSVADEFEVEEKVVRSKKNSNKKKKKGKGNEDKRQENFAGRQQTQTVETPD) form a disordered region. Positions 69–81 (RSKKNSNKKKKKG) are enriched in basic residues. In terms of domain architecture, tr-type G spans 188 to 357 (ERPAVVTIMG…LLVSEVEEYK (170 aa)). The tract at residues 197-204 (GHVDHGKT) is G1. 197-204 (GHVDHGKT) is a binding site for GTP. The G2 stretch occupies residues 222 to 226 (GITQH). The G3 stretch occupies residues 243–246 (DTPG). Residues 243 to 247 (DTPGH) and 297 to 300 (NKMD) contribute to the GTP site. Residues 297–300 (NKMD) form a G4 region. Positions 333 to 335 (SAI) are G5.

It belongs to the TRAFAC class translation factor GTPase superfamily. Classic translation factor GTPase family. IF-2 subfamily.

The protein resides in the cytoplasm. One of the essential components for the initiation of protein synthesis. Protects formylmethionyl-tRNA from spontaneous hydrolysis and promotes its binding to the 30S ribosomal subunits. Also involved in the hydrolysis of GTP during the formation of the 70S ribosomal complex. In Bacillus cereus (strain AH187), this protein is Translation initiation factor IF-2.